A 159-amino-acid chain; its full sequence is NADH-quinone oxidoreductase subunit B 2 (159 aa).

4 residues coordinate [4Fe-4S] cluster: Cys37, Cys38, Cys102, and Cys132.

It belongs to the complex I 20 kDa subunit family. As to quaternary structure, NDH-1 is composed of 14 different subunits. Subunits NuoB, C, D, E, F, and G constitute the peripheral sector of the complex. Requires [4Fe-4S] cluster as cofactor.

The protein resides in the cell inner membrane. The enzyme catalyses a quinone + NADH + 5 H(+)(in) = a quinol + NAD(+) + 4 H(+)(out). Functionally, NDH-1 shuttles electrons from NADH, via FMN and iron-sulfur (Fe-S) centers, to quinones in the respiratory chain. Couples the redox reaction to proton translocation (for every two electrons transferred, four hydrogen ions are translocated across the cytoplasmic membrane), and thus conserves the redox energy in a proton gradient. The sequence is that of NADH-quinone oxidoreductase subunit B 2 from Azoarcus sp. (strain BH72).